Here is a 485-residue protein sequence, read N- to C-terminus: Cysteine--tRNA ligase (485 aa).

Zn(2+) is bound at residue cysteine 27. Positions 29-39 (ITAYDFSHIGH) match the 'HIGH' region motif. The Zn(2+) site is built by cysteine 208, histidine 233, and glutamate 237. The short motif at 265 to 269 (KMSKS) is the 'KMSKS' region element. Lysine 268 contacts ATP.

It belongs to the class-I aminoacyl-tRNA synthetase family. In terms of assembly, monomer. It depends on Zn(2+) as a cofactor.

Its subcellular location is the cytoplasm. It carries out the reaction tRNA(Cys) + L-cysteine + ATP = L-cysteinyl-tRNA(Cys) + AMP + diphosphate. The sequence is that of Cysteine--tRNA ligase from Lawsonia intracellularis (strain PHE/MN1-00).